The primary structure comprises 642 residues: Threonine--tRNA ligase (642 aa).

The TGS domain maps to Met1 to Asp61. The interval Asp243–Pro534 is catalytic. Zn(2+) is bound by residues Cys334, His385, and His511.

The protein belongs to the class-II aminoacyl-tRNA synthetase family. In terms of assembly, homodimer. Zn(2+) is required as a cofactor.

The protein resides in the cytoplasm. It catalyses the reaction tRNA(Thr) + L-threonine + ATP = L-threonyl-tRNA(Thr) + AMP + diphosphate + H(+). Its function is as follows. Catalyzes the attachment of threonine to tRNA(Thr) in a two-step reaction: L-threonine is first activated by ATP to form Thr-AMP and then transferred to the acceptor end of tRNA(Thr). Also edits incorrectly charged L-seryl-tRNA(Thr). The sequence is that of Threonine--tRNA ligase from Buchnera aphidicola subsp. Acyrthosiphon pisum (strain APS) (Acyrthosiphon pisum symbiotic bacterium).